The primary structure comprises 414 residues: Probable peptidoglycan glycosyltransferase FtsW (414 aa).

At 1 to 12 the chain is on the cytoplasmic side; that stretch reads MRLSLPRLKMPR. The helical transmembrane segment at 13–33 threads the bilayer; it reads LPGFSILVWISTALKGWVMGS. The Periplasmic segment spans residues 34-47; it reads REKDTDSLIMYDRT. A helical transmembrane segment spans residues 48–68; sequence LLWLTFGLAAIGFIMVTSASM. Residues 69–86 lie on the Cytoplasmic side of the membrane; the sequence is PIGQRLTNDPFFFAKRDG. Residues 87 to 107 form a helical membrane-spanning segment; sequence VYLILAFILAIITLRLPMEFW. The Periplasmic portion of the chain corresponds to 108–111; it reads QRYS. Residues 112–132 form a helical membrane-spanning segment; the sequence is ATMLLGSIILLMIVLVVGSSV. The Cytoplasmic portion of the chain corresponds to 133–174; sequence KGASRWIDLGLLRIQPAELTKLSLFCYIANYLVRKGDEVRNN. The chain crosses the membrane as a helical span at residues 175–194; the sequence is LRGFLKPMGVILVLAVLLLA. The Periplasmic portion of the chain corresponds to 195–197; it reads QPD. Residues 198 to 217 traverse the membrane as a helical segment; that stretch reads LGTVVVLFVTTLAMLFLAGA. Residue Lys-218 is a topological domain, cytoplasmic. The chain crosses the membrane as a helical span at residues 219–239; sequence LWQFIAIIGMGISAVVLLILA. Topologically, residues 240–301 are periplasmic; sequence EPYRIRRVTA…PEAHTDFIFA (62 aa). A helical membrane pass occupies residues 302–322; the sequence is IIGEELGYVGVVLALLMVFFV. Topologically, residues 323–342 are cytoplasmic; that stretch reads AFRAMSIGRKALEIDHRFSG. A helical transmembrane segment spans residues 343–363; that stretch reads FLACSIGIWFSFQALVNVGAA. At 364–373 the chain is on the periplasmic side; the sequence is AGMLPTKGLT. A helical membrane pass occupies residues 374 to 394; sequence LPLISYGGSSLLIMSTAIMML. At 395–414 the chain is on the cytoplasmic side; it reads LRIDYETRLEKAQAFVRGSR.

This sequence belongs to the SEDS family. FtsW subfamily.

It is found in the cell inner membrane. It catalyses the reaction [GlcNAc-(1-&gt;4)-Mur2Ac(oyl-L-Ala-gamma-D-Glu-L-Lys-D-Ala-D-Ala)](n)-di-trans,octa-cis-undecaprenyl diphosphate + beta-D-GlcNAc-(1-&gt;4)-Mur2Ac(oyl-L-Ala-gamma-D-Glu-L-Lys-D-Ala-D-Ala)-di-trans,octa-cis-undecaprenyl diphosphate = [GlcNAc-(1-&gt;4)-Mur2Ac(oyl-L-Ala-gamma-D-Glu-L-Lys-D-Ala-D-Ala)](n+1)-di-trans,octa-cis-undecaprenyl diphosphate + di-trans,octa-cis-undecaprenyl diphosphate + H(+). The protein operates within cell wall biogenesis; peptidoglycan biosynthesis. In terms of biological role, peptidoglycan polymerase that is essential for cell division. This chain is Probable peptidoglycan glycosyltransferase FtsW, found in Escherichia coli O157:H7.